Consider the following 432-residue polypeptide: Glutamyl-tRNA reductase (432 aa).

Substrate contacts are provided by residues T49–R52, S109, E114–Q116, and Q120. C50 serves as the catalytic Nucleophile. NADP(+) is bound at residue G198–S203.

The protein belongs to the glutamyl-tRNA reductase family. In terms of assembly, homodimer.

It carries out the reaction (S)-4-amino-5-oxopentanoate + tRNA(Glu) + NADP(+) = L-glutamyl-tRNA(Glu) + NADPH + H(+). It functions in the pathway porphyrin-containing compound metabolism; protoporphyrin-IX biosynthesis; 5-aminolevulinate from L-glutamyl-tRNA(Glu): step 1/2. Its pathway is porphyrin-containing compound metabolism; chlorophyll biosynthesis. Functionally, catalyzes the NADPH-dependent reduction of glutamyl-tRNA(Glu) to glutamate 1-semialdehyde (GSA). In Parasynechococcus marenigrum (strain WH8102), this protein is Glutamyl-tRNA reductase.